Here is a 194-residue protein sequence, read N- to C-terminus: Lachesicidin (194 aa).

Positions M1–A22 are cleaved as a signal peptide. A propeptide spanning residues H23 to V160 is cleaved from the precursor. 2 disulfides stabilise this stretch: C79-C90 and C101-C118. Acidic residues predominate over residues E125–K154. Residues E125–P157 are disordered.

It belongs to the cathelicidin family. As to expression, expressed by the venom gland.

It is found in the secreted. The protein resides in the target cell membrane. Potent antimicrobial peptide against Gram-negative and Gram-positive bacteria. Adopts an amphipathic alpha helical conformation, that may allow to partition into the target membrane. Low hemolytic activities have been observed on mammalian cells. The polypeptide is Lachesicidin (Lachesis muta rhombeata (Bushmaster)).